Here is a 1215-residue protein sequence, read N- to C-terminus: DNA-directed RNA polymerase subunit beta' (1215 aa).

Zn(2+) is bound by residues cysteine 60, cysteine 62, cysteine 75, and cysteine 78. Aspartate 450, aspartate 452, and aspartate 454 together coordinate Mg(2+). Zn(2+)-binding residues include cysteine 818, cysteine 892, cysteine 899, and cysteine 902.

The protein belongs to the RNA polymerase beta' chain family. In terms of assembly, the RNAP catalytic core consists of 2 alpha, 1 beta, 1 beta' and 1 omega subunit. When a sigma factor is associated with the core the holoenzyme is formed, which can initiate transcription. The cofactor is Mg(2+). It depends on Zn(2+) as a cofactor.

It catalyses the reaction RNA(n) + a ribonucleoside 5'-triphosphate = RNA(n+1) + diphosphate. Functionally, DNA-dependent RNA polymerase catalyzes the transcription of DNA into RNA using the four ribonucleoside triphosphates as substrates. This chain is DNA-directed RNA polymerase subunit beta', found in Streptococcus sanguinis (strain SK36).